Here is a 298-residue protein sequence, read N- to C-terminus: MKDFFRRAPLPFTSSRREQQIPDNVWAKCANCGELTYQKQFNDALKVCPKCSYHSRISSREWIEVLADADSFVEYDADLQGIDILGFVSPKDNYEAKLAATSERTGTNDVVMSGSASIEGLPFEIAACNFEFMGGSMGSVFGEKVARAVERAADRGVPVLTINASGGARMHEGIFALMQMAKVSVALTRLARVRQPHISLLVDPCYGGVSASYASVADIILAEPGANIGFAGRRVIEQTIRQKLPPNFQTAEFFLEHGMIDAVVPRSDMRATIGRLLRLYQRPTSSADHREHVVAGHQ.

The CoA carboxyltransferase N-terminal domain occupies 25–295 (VWAKCANCGE…SADHREHVVA (271 aa)). Zn(2+)-binding residues include C29, C32, C48, and C51. The C4-type zinc-finger motif lies at 29 to 51 (CANCGELTYQKQFNDALKVCPKC).

This sequence belongs to the AccD/PCCB family. Acetyl-CoA carboxylase is a heterohexamer composed of biotin carboxyl carrier protein (AccB), biotin carboxylase (AccC) and two subunits each of ACCase subunit alpha (AccA) and ACCase subunit beta (AccD). Requires Zn(2+) as cofactor.

Its subcellular location is the cytoplasm. It carries out the reaction N(6)-carboxybiotinyl-L-lysyl-[protein] + acetyl-CoA = N(6)-biotinyl-L-lysyl-[protein] + malonyl-CoA. It participates in lipid metabolism; malonyl-CoA biosynthesis; malonyl-CoA from acetyl-CoA: step 1/1. Its function is as follows. Component of the acetyl coenzyme A carboxylase (ACC) complex. Biotin carboxylase (BC) catalyzes the carboxylation of biotin on its carrier protein (BCCP) and then the CO(2) group is transferred by the transcarboxylase to acetyl-CoA to form malonyl-CoA. In Herpetosiphon aurantiacus (strain ATCC 23779 / DSM 785 / 114-95), this protein is Acetyl-coenzyme A carboxylase carboxyl transferase subunit beta.